The sequence spans 465 residues: Sushi repeat-containing protein SRPX2 (465 aa).

Residues 1–23 form the signal peptide; sequence MASQLTQRGALFLLFFLTPAVTP. Sushi domains lie at 69–119, 120–178, and 262–321; these read ATCY…YCRQ, MRCH…VCVD, and RRCP…ICAP. Intrachain disulfides connect Cys-71–Cys-105, Cys-91–Cys-117, Cys-122–Cys-163, and Cys-149–Cys-176. Residues 177-261 form the HYR domain; the sequence is VDIDPPKIRC…SCKFIVKVQV (85 aa). Intrachain disulfides connect Cys-264–Cys-306 and Cys-292–Cys-319.

As to quaternary structure, forms homooligomers. Interacts with PLAUR (via the UPAR/Ly6 domains), ADAMTS4 and CTSB. Interacts with HGF; the interaction increases the mitogenic activity of HGF. Contains chondroitin sulfate chains. In terms of tissue distribution, expressed in neurons of the rolandic area of the brain (at protein level). Highly expressed in the brain, placenta, lung, trachea, uterus, adrenal gland, heart, ovary and placenta. Weakly expressed in the peripheral blood, brain and bone marrow. Expressed in numerous cancer cell lines and in gastrointestinal cancer cells. Higher levels found in colorectal cancers than in normal colonic mucosa.

The protein localises to the secreted. It is found in the cytoplasm. It localises to the cell surface. Its subcellular location is the synapse. Its function is as follows. Acts as a ligand for the urokinase plasminogen activator surface receptor. Plays a role in angiogenesis by inducing endothelial cell migration and the formation of vascular network (cords). Involved in cellular migration and adhesion. Increases the phosphorylation levels of FAK. Interacts with and increases the mitogenic activity of HGF. Promotes synapse formation. May have a role in the perisylvian region, critical for language and cognitive development. The protein is Sushi repeat-containing protein SRPX2 (SRPX2) of Homo sapiens (Human).